A 184-amino-acid chain; its full sequence is Large ribosomal subunit protein uL18 (184 aa).

Belongs to the universal ribosomal protein uL18 family. Part of the 50S ribosomal subunit. Contacts the 5S and 23S rRNAs.

Its function is as follows. This is one of the proteins that bind and probably mediate the attachment of the 5S RNA into the large ribosomal subunit, where it forms part of the central protuberance. This chain is Large ribosomal subunit protein uL18 (rpl18), found in Haloferax volcanii (strain ATCC 29605 / DSM 3757 / JCM 8879 / NBRC 14742 / NCIMB 2012 / VKM B-1768 / DS2) (Halobacterium volcanii).